The chain runs to 523 residues: Bifunctional purine biosynthesis protein PurH (523 aa).

Residues 1–149 enclose the MGS-like domain; sequence MSDPVIKRAL…KNNESVTVIT (149 aa).

Belongs to the PurH family.

It carries out the reaction (6R)-10-formyltetrahydrofolate + 5-amino-1-(5-phospho-beta-D-ribosyl)imidazole-4-carboxamide = 5-formamido-1-(5-phospho-D-ribosyl)imidazole-4-carboxamide + (6S)-5,6,7,8-tetrahydrofolate. The enzyme catalyses IMP + H2O = 5-formamido-1-(5-phospho-D-ribosyl)imidazole-4-carboxamide. Its pathway is purine metabolism; IMP biosynthesis via de novo pathway; 5-formamido-1-(5-phospho-D-ribosyl)imidazole-4-carboxamide from 5-amino-1-(5-phospho-D-ribosyl)imidazole-4-carboxamide (10-formyl THF route): step 1/1. It functions in the pathway purine metabolism; IMP biosynthesis via de novo pathway; IMP from 5-formamido-1-(5-phospho-D-ribosyl)imidazole-4-carboxamide: step 1/1. This Chlorobaculum parvum (strain DSM 263 / NCIMB 8327) (Chlorobium vibrioforme subsp. thiosulfatophilum) protein is Bifunctional purine biosynthesis protein PurH.